Consider the following 429-residue polypeptide: S-adenosylmethionine synthase (429 aa).

Residue histidine 14 coordinates ATP. Aspartate 16 lines the Mg(2+) pocket. Glutamate 42 provides a ligand contact to K(+). L-methionine is bound by residues glutamate 55 and glutamine 98. The flexible loop stretch occupies residues 98–108 (QSADINRGVDR). ATP is bound by residues 165-167 (DAK), 252-253 (KF), aspartate 261, 267-268 (RK), alanine 284, and lysine 288. Aspartate 261 is a binding site for L-methionine. Residue lysine 292 coordinates L-methionine.

It belongs to the AdoMet synthase family. As to quaternary structure, homotetramer; dimer of dimers. Mg(2+) serves as cofactor. It depends on K(+) as a cofactor.

The protein resides in the cytoplasm. The catalysed reaction is L-methionine + ATP + H2O = S-adenosyl-L-methionine + phosphate + diphosphate. It participates in amino-acid biosynthesis; S-adenosyl-L-methionine biosynthesis; S-adenosyl-L-methionine from L-methionine: step 1/1. In terms of biological role, catalyzes the formation of S-adenosylmethionine (AdoMet) from methionine and ATP. The overall synthetic reaction is composed of two sequential steps, AdoMet formation and the subsequent tripolyphosphate hydrolysis which occurs prior to release of AdoMet from the enzyme. The protein is S-adenosylmethionine synthase of Porphyromonas gingivalis (strain ATCC BAA-308 / W83).